The chain runs to 174 residues: Guided entry of tail-anchored proteins factor 1 (174 aa).

At 1–8 (MSSAAADH) the chain is on the lumenal side. The chain crosses the membrane as a helical span at residues 9–29 (WAWLLVLSFVFGCNVLRVLLP). At 30-99 (SFSSFMSRVL…VKARTAQLAK (70 aa)) the chain is on the cytoplasmic side. Residues 39-94 (LQKDAEQESQMRAEIQDMKQELSTVNMMDEFARYARLERKINKMTDKLKTHVKART) adopt a coiled-coil conformation. The segment at 39 to 97 (LQKDAEQESQMRAEIQDMKQELSTVNMMDEFARYARLERKINKMTDKLKTHVKARTAQL) is interaction with GET3/TRC40. A helical membrane pass occupies residues 100-120 (IKWVISVAFYVLQAALMISLI). Over 121-148 (WKYYSVPVAVVPSKWITPLDRLVAFPTR) the chain is Lumenal. Residues 149-169 (VAGGVGITCWILVCNKVVAIV) form a helical membrane-spanning segment. The Cytoplasmic segment spans residues 170-174 (LHPFS).

Belongs to the WRB/GET1 family. As to quaternary structure, component of the Golgi to ER traffic (GET) complex, which is composed of GET1/WRB, CAMLG/GET2 and GET3. Within the complex, GET1 and CAMLG form a heterotetramer which is stabilized by phosphatidylinositol binding and which binds to the GET3 homodimer. Interacts with CAMLG (via C-terminus). GET3 shows a higher affinity for CAMLG than for GET1.

It localises to the endoplasmic reticulum membrane. Its function is as follows. Required for the post-translational delivery of tail-anchored (TA) proteins to the endoplasmic reticulum. Together with CAMLG/GET2, acts as a membrane receptor for soluble GET3/TRC40, which recognizes and selectively binds the transmembrane domain of TA proteins in the cytosol. Required to ensure correct topology and ER insertion of CAMLG. The polypeptide is Guided entry of tail-anchored proteins factor 1 (Pongo abelii (Sumatran orangutan)).